We begin with the raw amino-acid sequence, 709 residues long: Myotubularin-related protein 11 (709 aa).

A disordered region spans residues 1-39; that stretch reads MWWGGRGQSFNIAPQKEEPEMGSVQENRMPEPRSRQPSS. The Myotubularin phosphatase domain maps to 196–639; sequence METAEDWETE…PQIRLWRRCY (444 aa).

It belongs to the protein-tyrosine phosphatase family. Non-receptor class myotubularin subfamily. Expressed in bone marrow, spleen and thymus.

The polypeptide is Myotubularin-related protein 11 (MTMR11) (Homo sapiens (Human)).